The following is a 215-amino-acid chain: Small ribosomal subunit protein eS1 (215 aa).

It belongs to the eukaryotic ribosomal protein eS1 family.

This chain is Small ribosomal subunit protein eS1, found in Thermoplasma volcanium (strain ATCC 51530 / DSM 4299 / JCM 9571 / NBRC 15438 / GSS1).